Consider the following 329-residue polypeptide: Succinylglutamate desuccinylase (329 aa).

Residues His53, Glu56, and His148 each coordinate Zn(2+). Glu211 is a catalytic residue.

It belongs to the AspA/AstE family. Succinylglutamate desuccinylase subfamily. It depends on Zn(2+) as a cofactor.

The enzyme catalyses N-succinyl-L-glutamate + H2O = L-glutamate + succinate. It functions in the pathway amino-acid degradation; L-arginine degradation via AST pathway; L-glutamate and succinate from L-arginine: step 5/5. Functionally, transforms N(2)-succinylglutamate into succinate and glutamate. This is Succinylglutamate desuccinylase from Erwinia tasmaniensis (strain DSM 17950 / CFBP 7177 / CIP 109463 / NCPPB 4357 / Et1/99).